The chain runs to 848 residues: Beta-galactosidase 13 (848 aa).

Positions 1–27 are cleaved as a signal peptide; sequence MKIHSSDHSWLLLAVLVILLSFSGALS. The N-linked (GlcNAc...) asparagine glycan is linked to asparagine 107. Catalysis depends on glutamate 200, which acts as the Proton donor. Glutamate 271 acts as the Nucleophile in catalysis. N-linked (GlcNAc...) asparagine glycans are attached at residues asparagine 272, asparagine 303, asparagine 376, asparagine 398, asparagine 782, asparagine 787, and asparagine 817. Positions 754-843 constitute an SUEL-type lectin domain; it reads DDVHLTANLK…KKLAVQVKCG (90 aa).

Belongs to the glycosyl hydrolase 35 family. As to expression, ubiquitous, with higher expression levels in roots, flowers and siliques.

Its subcellular location is the secreted. The protein localises to the extracellular space. The protein resides in the apoplast. The enzyme catalyses Hydrolysis of terminal non-reducing beta-D-galactose residues in beta-D-galactosides.. The chain is Beta-galactosidase 13 (BGAL13) from Arabidopsis thaliana (Mouse-ear cress).